A 393-amino-acid chain; its full sequence is Na(+)/H(+) antiporter NhaA (393 aa).

The next 12 helical transmembrane spans lie at 23-43 (AGGITLMAAAALALIVANSPF), 58-78 (LSLAHWINDALMAKFFLLVGL), 96-116 (MLPGIAAAGGVILPAIIFAVL), 126-146 (GWAVPSATDIAFALGVLSLLG), 155-175 (VFLATLAILDDLAAVVIIAIF), 178-198 (AEISMPYLGAAFITAAVLFVM), 201-221 (MGVVKLLPYLISAVILWFFVF), 224-244 (GVHATVAGVVAALMIPLKPAP), 265-285 (VAFIVVPIFGFANAGISFKGL), 298-318 (ILLGLFLGKQFGVFGAAWLAI), 334-354 (LYGVAILCGIGFTMSIFIGLL), and 367-387 (IGVLSGSALSAICGYLLLRAA).

Belongs to the NhaA Na(+)/H(+) (TC 2.A.33) antiporter family.

The protein localises to the cell inner membrane. The enzyme catalyses Na(+)(in) + 2 H(+)(out) = Na(+)(out) + 2 H(+)(in). Na(+)/H(+) antiporter that extrudes sodium in exchange for external protons. The chain is Na(+)/H(+) antiporter NhaA from Brucella suis (strain ATCC 23445 / NCTC 10510).